We begin with the raw amino-acid sequence, 608 residues long: UvrABC system protein C (608 aa).

The region spanning 13-91 (HDAGVYRMYD…IKTYQPRYNV (79 aa)) is the GIY-YIG domain. The 36-residue stretch at 201 to 236 (QQVLEHLIHKMEQASLALDFEEAARIRDQIQAVRAV) folds into the UVR domain.

This sequence belongs to the UvrC family. As to quaternary structure, interacts with UvrB in an incision complex.

It localises to the cytoplasm. In terms of biological role, the UvrABC repair system catalyzes the recognition and processing of DNA lesions. UvrC both incises the 5' and 3' sides of the lesion. The N-terminal half is responsible for the 3' incision and the C-terminal half is responsible for the 5' incision. In Pasteurella multocida (strain Pm70), this protein is UvrABC system protein C.